A 103-amino-acid chain; its full sequence is Small ribosomal subunit protein uS10 (103 aa).

This sequence belongs to the universal ribosomal protein uS10 family. In terms of assembly, part of the 30S ribosomal subunit.

In terms of biological role, involved in the binding of tRNA to the ribosomes. The polypeptide is Small ribosomal subunit protein uS10 (Psychrobacter arcticus (strain DSM 17307 / VKM B-2377 / 273-4)).